Consider the following 807-residue polypeptide: MYNHKEIEKKWQKIWDQSKAFKTGNKSDKKYYVLDMFPYPSGSGLHVGHPEGYTATDIIARFKRLKGFDVLHPMGWDAFGLPAEQYAISTGNNPNEFTQKNIATFKKQIKSLGLSYDFDKEVNTTDPKFYEQTQWIFKELYKKGLAVLADIDVNWCEELGTVLANEEVLIDKDGNKVSERGSFPVVKKKMRQWVLKITNYADKLLEGLEDLDWENSLKLLQKNWIGKSTGTKVKFALELLDESIEVFTTRIETIFGATFLTISPEHPLVEKIVTSENKEKVKDFIKEFEKLDDRQKADKNEKNGIFTGSYAINPFNQKKIPIWIGDFVLLSYGTGAIMSVPAHDKRDYEFANKYGLEIKQVIVSKENVELPYLESGHLINSSEFNGLSSKEAIEKLNQYVEKNNLGQVETFYKLRDWIFSRQRYWGEPFPVAFDDENNVYLIDGLVELPFMENIKPSKNGQSPLFNNKKWLYFEKDGKKLTRETNTMPQWAGSNWYYLAYILKNADGSYEKLDSEEAKKRFKKWLPVDLYIGGQEHAVLHLLYSRFWHRFLYDIGVVPTKEPFQKVVNQGMILGTDGQKMSKSRGNIINPSEIVDELGADTLRVYEMFMGPLTDDKDWQVESIKGIRKWLERVYRLFEMFFDGQKTIEKSNEDHLILSQYNKLIKEIENEVELLKFNTAISKLMVFVNLLYKVEKIPSWEILKNFALILSLFAPHIAEELLEKMNQKQVKDQIWPTYDPTYLESNLTKYVIQINGKVRAIVDFELDKTQEEVLAKAMQIEKIKTLLENKNIIKVIFVANKVLNLIVK.

The 'HIGH' region signature appears at 38-49 (PYPSGSGLHVGH). The short motif at 579–583 (KMSKS) is the 'KMSKS' region element. Residue Lys-582 participates in ATP binding.

The protein belongs to the class-I aminoacyl-tRNA synthetase family.

It is found in the cytoplasm. It catalyses the reaction tRNA(Leu) + L-leucine + ATP = L-leucyl-tRNA(Leu) + AMP + diphosphate. The polypeptide is Leucine--tRNA ligase (Mycoplasmopsis pulmonis (strain UAB CTIP) (Mycoplasma pulmonis)).